The following is a 419-amino-acid chain: L-rhamnose isomerase (419 aa).

Histidine 262, aspartate 294, and aspartate 296 together coordinate Mn(2+).

It belongs to the rhamnose isomerase family. As to quaternary structure, homotetramer. Mn(2+) is required as a cofactor.

It localises to the cytoplasm. It catalyses the reaction L-rhamnopyranose = L-rhamnulose. The protein operates within carbohydrate degradation; L-rhamnose degradation; glycerone phosphate from L-rhamnose: step 1/3. In terms of biological role, catalyzes the interconversion of L-rhamnose and L-rhamnulose. The protein is L-rhamnose isomerase of Salmonella agona (strain SL483).